Reading from the N-terminus, the 143-residue chain is Ribonuclease H (143 aa).

The 140-residue stretch at 1 to 140 folds into the RNase H type-1 domain; it reads MKVEIYTDGA…VDALANLGIE (140 aa). Mg(2+)-binding residues include aspartate 8, glutamate 46, aspartate 68, and aspartate 132.

This sequence belongs to the RNase H family. As to quaternary structure, monomer. Mg(2+) is required as a cofactor.

Its subcellular location is the cytoplasm. The enzyme catalyses Endonucleolytic cleavage to 5'-phosphomonoester.. Its function is as follows. Endonuclease that specifically degrades the RNA of RNA-DNA hybrids. The sequence is that of Ribonuclease H from Legionella pneumophila (strain Paris).